The chain runs to 543 residues: Protein male-specific lethal-3 (543 aa).

Positions 10-90 (LFNRGEKVLC…KLQRELAEAA (81 aa)) constitute a Chromo domain. A disordered region spans residues 93-247 (QKTGGYSYKD…THTTDAEKRI (155 aa)). Basic and acidic residues-rich tracts occupy residues 180-202 (RSRD…DNSS), 210-224 (KSKG…ERRS), and 234-247 (SPKD…EKRI). In terms of domain architecture, MRG spans 249 to 542 (QEDRVMLRIS…PLIDQGRELS (294 aa)).

As to quaternary structure, component of the male-specific lethal (MSL) histone acetyltransferase complex, composed of mof, mle, msl-1, msl-2 and msl-3 proteins, as well as roX1 and roX2 non-coding RNAs. Post-translationally, ubiquitinated by msl-2.

Its subcellular location is the nucleus. It is found in the chromosome. Component of the male-specific lethal (MSL) histone acetyltransferase complex, a multiprotein complex essential for elevating transcription of the single X chromosome in the male (X chromosome dosage compensation). The MSL complex specifically associates with the single X chromosome in males and mediates formation of H4K16ac, promoting a two-fold activation of X chromosome. Acts as a histone reader that specifically recognizes and binds histone H3 trimethylated at 'Lys-36' (H3K36me3) and histone H4 monomethylated at 'Lys-20' (H4K20me1). Within the MSL complex, mediates the spreading of the MSL complex from initiation sites on the male X chromosome to flanking chromatin. Following initial recruitment of the MSL complex to male X chromosome by msl-2, msl-3 binds H3K36me3 and promotes spreading of the MSL complex in cis. In addition to its role in dosage compensation in males, promotes germline stem cell differentiation in females: recognizes and binds H3K36me3, promoting recruitment of the ATAC complex and transcription of genes, such as RpS19b. This is Protein male-specific lethal-3 (msl-3) from Drosophila virilis (Fruit fly).